Here is a 182-residue protein sequence, read N- to C-terminus: Capsid protein (182 aa).

Residues 1–25 (MSSAAQPMSRRARRRAARRALGSQP) are disordered.

The protein localises to the virion. Functionally, capsid protein self-assembles to form a quasi-spherical capsid, about 26 nm, or bacilliform. The protein is Capsid protein of Olive latent virus 2 (isolate Italy) (OLV-2).